A 265-amino-acid polypeptide reads, in one-letter code: HUWE1-associated protein modifying stress responses (265 aa).

Disordered regions lie at residues 1–22, 140–173, and 194–219; these read MEEKKEEGEAEIQEHGPEHWFS, GKAPPPRSSRAPPRLAMVSPSRSTPSETSSSVET, and ISMRSGAPGSPTHLSASSAPSRRRNG. Low complexity predominate over residues 147–172; it reads SSRAPPRLAMVSPSRSTPSETSSSVE.

The protein belongs to the HAPSTR1 family. In terms of assembly, oligomer.

It localises to the nucleus. The protein localises to the cytoplasm. Its function is as follows. Acts as a central player within a network of stress response pathways promoting cellular adaptability. Functions as a negative regulator of TP53/P53 in the cellular response to telomere erosion and probably also DNA damage. This is HUWE1-associated protein modifying stress responses from Danio rerio (Zebrafish).